The sequence spans 216 residues: Oligoribonuclease (216 aa).

Positions Val6–Leu171 constitute an Exonuclease domain. The active site involves Tyr128.

It belongs to the oligoribonuclease family.

It localises to the cytoplasm. Its function is as follows. 3'-to-5' exoribonuclease specific for small oligoribonucleotides. The protein is Oligoribonuclease of Nocardia farcinica (strain IFM 10152).